Consider the following 53-residue polypeptide: UPF0391 membrane protein Bxeno_A2958 (53 aa).

Transmembrane regions (helical) follow at residues Ala5 to Ala25 and Ile30 to Val50.

This sequence belongs to the UPF0391 family.

It is found in the cell membrane. This chain is UPF0391 membrane protein Bxeno_A2958, found in Paraburkholderia xenovorans (strain LB400).